A 61-amino-acid polypeptide reads, in one-letter code: MAQVWKYYEIKDGKLIRKKKVCPRCGSFMAEHKDRYHCGKCGYTEWKVERPKIVIHGATIE.

Zn(2+)-binding residues include cysteine 22, cysteine 25, cysteine 38, and cysteine 41. The C4-type zinc-finger motif lies at 22 to 41 (CPRCGSFMAEHKDRYHCGKC).

The protein belongs to the eukaryotic ribosomal protein eS31 family. As to quaternary structure, part of the 30S ribosomal subunit. Zn(2+) serves as cofactor.

This chain is Small ribosomal subunit protein eS31, found in Nanoarchaeum equitans (strain Kin4-M).